A 184-amino-acid polypeptide reads, in one-letter code: Protein GrpE (184 aa).

The interval 1–35 is disordered; sequence MTQENQNPPPEQEDVAADPQVNEAAASEPAAVKTP.

Belongs to the GrpE family. As to quaternary structure, homodimer.

It localises to the cytoplasm. Its function is as follows. Participates actively in the response to hyperosmotic and heat shock by preventing the aggregation of stress-denatured proteins, in association with DnaK and GrpE. It is the nucleotide exchange factor for DnaK and may function as a thermosensor. Unfolded proteins bind initially to DnaJ; upon interaction with the DnaJ-bound protein, DnaK hydrolyzes its bound ATP, resulting in the formation of a stable complex. GrpE releases ADP from DnaK; ATP binding to DnaK triggers the release of the substrate protein, thus completing the reaction cycle. Several rounds of ATP-dependent interactions between DnaJ, DnaK and GrpE are required for fully efficient folding. The sequence is that of Protein GrpE from Polynucleobacter asymbioticus (strain DSM 18221 / CIP 109841 / QLW-P1DMWA-1) (Polynucleobacter necessarius subsp. asymbioticus).